The chain runs to 693 residues: ATP-dependent DNA helicase RecG (693 aa).

Positions 48-146 are wedge domain; it reads THLYPIGELL…GDLSTPELQE (99 aa). The Helicase ATP-binding domain occupies 283–448; sequence DMALDVPMMR…AYADLDTSVI (166 aa). Residue 296-303 coordinates ATP; the sequence is GDVGSGKT. Residues 397–400 carry the DEAH box motif; sequence DEQH. A Helicase C-terminal domain is found at 482 to 628; the sequence is EGRQAYWVCT…GFVIAQKDLE (147 aa).

The protein belongs to the helicase family. RecG subfamily. As to quaternary structure, monomer.

It carries out the reaction Couples ATP hydrolysis with the unwinding of duplex DNA by translocating in the 3'-5' direction.. It catalyses the reaction ATP + H2O = ADP + phosphate + H(+). In terms of biological role, plays a critical role in recombination and DNA repair. Helps process Holliday junction intermediates to mature products by catalyzing branch migration. Has replication fork regression activity, unwinds stalled or blocked replication forks to make a HJ that can be resolved. Has a DNA unwinding activity characteristic of a DNA helicase with 3'-5' polarity. Functionally, plays a role in recovery after DNA ADP-ribosylation. The polypeptide is ATP-dependent DNA helicase RecG (Escherichia coli O127:H6 (strain E2348/69 / EPEC)).